A 337-amino-acid polypeptide reads, in one-letter code: Large ribosomal subunit protein uL3 (337 aa).

Residues 1–26 are disordered; that stretch reads MGHAHAPRRGSLGYSPRVRARSQKPK.

The protein belongs to the universal ribosomal protein uL3 family. In terms of assembly, part of the 50S ribosomal subunit. Forms a cluster with proteins L14 and L24e.

In terms of biological role, one of the primary rRNA binding proteins, it binds directly near the 3'-end of the 23S rRNA, where it nucleates assembly of the 50S subunit. The protein is Large ribosomal subunit protein uL3 of Methanocella arvoryzae (strain DSM 22066 / NBRC 105507 / MRE50).